The chain runs to 329 residues: Biotin synthase (329 aa).

A Radical SAM core domain is found at Gly36–Lys260. Positions 51, 55, and 58 each coordinate [4Fe-4S] cluster. [2Fe-2S] cluster-binding residues include Cys95, Cys126, Cys186, and Arg264.

It belongs to the radical SAM superfamily. Biotin synthase family. As to quaternary structure, homodimer. [4Fe-4S] cluster is required as a cofactor. It depends on [2Fe-2S] cluster as a cofactor.

It catalyses the reaction (4R,5S)-dethiobiotin + (sulfur carrier)-SH + 2 reduced [2Fe-2S]-[ferredoxin] + 2 S-adenosyl-L-methionine = (sulfur carrier)-H + biotin + 2 5'-deoxyadenosine + 2 L-methionine + 2 oxidized [2Fe-2S]-[ferredoxin]. It functions in the pathway cofactor biosynthesis; biotin biosynthesis; biotin from 7,8-diaminononanoate: step 2/2. Catalyzes the conversion of dethiobiotin (DTB) to biotin by the insertion of a sulfur atom into dethiobiotin via a radical-based mechanism. This Sphingopyxis alaskensis (strain DSM 13593 / LMG 18877 / RB2256) (Sphingomonas alaskensis) protein is Biotin synthase.